A 123-amino-acid chain; its full sequence is Large ribosomal subunit protein bL12 (123 aa).

Belongs to the bacterial ribosomal protein bL12 family. As to quaternary structure, homodimer. Part of the ribosomal stalk of the 50S ribosomal subunit. Forms a multimeric L10(L12)X complex, where L10 forms an elongated spine to which 2 to 4 L12 dimers bind in a sequential fashion. Binds GTP-bound translation factors.

Its function is as follows. Forms part of the ribosomal stalk which helps the ribosome interact with GTP-bound translation factors. Is thus essential for accurate translation. The polypeptide is Large ribosomal subunit protein bL12 (Roseobacter denitrificans (strain ATCC 33942 / OCh 114) (Erythrobacter sp. (strain OCh 114))).